A 92-amino-acid chain; its full sequence is Small ribosomal subunit protein uS19 (92 aa).

The protein belongs to the universal ribosomal protein uS19 family.

In terms of biological role, protein S19 forms a complex with S13 that binds strongly to the 16S ribosomal RNA. The sequence is that of Small ribosomal subunit protein uS19 from Rickettsia typhi (strain ATCC VR-144 / Wilmington).